The sequence spans 231 residues: Octanoyl-[acyl-carrier-protein]:protein N-octanoyltransferase LIPT2, mitochondrial (231 aa).

In terms of domain architecture, BPL/LPL catalytic spans 41–224 (GTKAGVLLVC…AFKETFKCTL (184 aa)). Lys-43 carries the N6-succinyllysine modification. Substrate-binding positions include 85–92 (RGGLATFH), 154–156 (AIG), and 167–169 (GLA). Residue Cys-185 is the Acyl-thioester intermediate of the active site.

Belongs to the LipB family.

It is found in the mitochondrion. It carries out the reaction octanoyl-[ACP] + L-lysyl-[protein] = N(6)-octanoyl-L-lysyl-[protein] + holo-[ACP] + H(+). Its pathway is protein modification; protein lipoylation via endogenous pathway; protein N(6)-(lipoyl)lysine from octanoyl-[acyl-carrier-protein]: step 1/2. In terms of biological role, catalyzes the transfer of endogenously produced octanoic acid from octanoyl-acyl-carrier-protein onto the lipoyl domains of lipoate-dependent enzymes such as the protein H of the glycine cleavage system (GCSH). Lipoyl-ACP can also act as a substrate although octanoyl-ACP is likely to be the physiological substrate. This Mus musculus (Mouse) protein is Octanoyl-[acyl-carrier-protein]:protein N-octanoyltransferase LIPT2, mitochondrial.